Reading from the N-terminus, the 145-residue chain is UPF0201 protein Saci_1285 (145 aa).

It belongs to the UPF0201 family.

This is UPF0201 protein Saci_1285 from Sulfolobus acidocaldarius (strain ATCC 33909 / DSM 639 / JCM 8929 / NBRC 15157 / NCIMB 11770).